The following is a 1077-amino-acid chain: Tudor domain-containing protein 7 (1077 aa).

HTH OST-type domains lie at 1–67 (MLRA…YAVV) and 220–289 (DLSV…LYST). Residues 300–328 (VQNHSNNQAKPNVPVDSTPSSPPLQSSGN) are compositionally biased toward polar residues. The segment at 300-331 (VQNHSNNQAKPNVPVDSTPSSPPLQSSGNIPK) is disordered. The 69-residue stretch at 330–398 (PKDELKQKIS…PFKAILYAKS (69 aa)) folds into the HTH OST-type 3 domain. Tudor domains are found at residues 494–551 (FLRV…FYTL) and 684–741 (LPFC…LLRD). A disordered region spans residues 841–883 (SRGGGAQASELSPPGLCKDHTSAVKKPDMQQSSSVPSFNMPPP). Residues 857–868 (CKDHTSAVKKPD) show a composition bias toward basic and acidic residues.

This sequence belongs to the TDRD7 family.

It is found in the cytoplasm. Its function is as follows. Component of specific cytoplasmic RNA granules involved in post-transcriptional regulation of specific genes: probably acts by binding to specific mRNAs and regulating their translation. Probably required during spermatogenesis. The sequence is that of Tudor domain-containing protein 7 (tdrd7) from Xenopus tropicalis (Western clawed frog).